A 286-amino-acid chain; its full sequence is 2-hydroxy-6-oxononadienedioate/2-hydroxy-6-oxononatrienedioate hydrolase (286 aa).

In terms of domain architecture, AB hydrolase-1 spans 36-271; sequence VIMLHGGGPG…RCGHWAQWEH (236 aa). The active-site Proton acceptor is the H265.

Belongs to the AB hydrolase superfamily. BphD family. Homodimer.

It catalyses the reaction (2Z,4E)-2-hydroxy-6-oxonona-2,4-dienedioate + H2O = (2Z)-2-hydroxypenta-2,4-dienoate + succinate + H(+). The catalysed reaction is (2Z,4E,7E)-2-hydroxy-6-oxonona-2,4,7-trienedioate + H2O = (2Z)-2-hydroxypenta-2,4-dienoate + fumarate + H(+). It participates in aromatic compound metabolism; 3-phenylpropanoate degradation. Functionally, catalyzes the cleavage of the C5-C6 bond of 2-hydroxy-6-oxononadienedioate, and probably also 2-hydroxy-6-oxononatrienedioate, a dienol ring fission product of the bacterial meta-cleavage pathway for degradation of phenylpropionic acid. The chain is 2-hydroxy-6-oxononadienedioate/2-hydroxy-6-oxononatrienedioate hydrolase (mhpC) from Comamonas testosteroni (Pseudomonas testosteroni).